The primary structure comprises 1706 residues: Serine/threonine-protein kinase vps15 (1706 aa).

A Protein kinase domain is found at tyrosine 24–phenylalanine 293. Residues leucine 30–threonine 38 and lysine 52 contribute to the ATP site. The stretch at asparagine 56–leucine 94 is one HEAT 1 repeat. The active-site Proton acceptor is aspartate 146. HEAT repeat units follow at residues leucine 426–aspartate 465, glutamate 466–serine 504, phenylalanine 511–lysine 549, histidine 587–lysine 625, alanine 626–proline 664, arginine 665–phenylalanine 703, and lysine 705–aspartate 743. Position 957 is a phosphoserine (serine 957). Tyrosine 958 is modified (phosphotyrosine). The segment at threonine 982–serine 1099 is disordered. Basic and acidic residues-rich tracts occupy residues lysine 984–asparagine 1002 and aspartate 1014–glutamate 1023. A compositionally biased stretch (polar residues) spans aspartate 1029–tyrosine 1055. A compositionally biased stretch (low complexity) spans asparagine 1056–proline 1069. A compositionally biased stretch (basic and acidic residues) spans lysine 1079–glycine 1090. WD repeat units follow at residues leucine 1213–serine 1252 and leucine 1368–serine 1407. Residues asparagine 1431–valine 1442 are compositionally biased toward polar residues. The disordered stretch occupies residues asparagine 1431–serine 1461. One copy of the WD 3 repeat lies at cysteine 1577 to serine 1622.

It belongs to the protein kinase superfamily. Ser/Thr protein kinase family. Component of the autophagy-specific vps34 PI3-kinase complex I composed of vps15, atg6, pik3/vps34, atg14 and atg38. Also a component of the vps34 PI3-kinase complex II composed of atg6, pik3, vps15 and vps38.

It catalyses the reaction L-seryl-[protein] + ATP = O-phospho-L-seryl-[protein] + ADP + H(+). It carries out the reaction L-threonyl-[protein] + ATP = O-phospho-L-threonyl-[protein] + ADP + H(+). Functions as a part of the autophagy-specific VPS34 PI3-kinase complex I that plays a role in autophagosome assembly. This complex is essential to recruit the atg8-phosphatidylinositol conjugate and the atg12-atg5 conjugate to the pre-autophagosomal structure. Also functions as part of the VPS34 PI3-kinase complex II. This Schizosaccharomyces pombe (strain 972 / ATCC 24843) (Fission yeast) protein is Serine/threonine-protein kinase vps15.